We begin with the raw amino-acid sequence, 242 residues long: uncharacterized protein (242 aa).

An NADP(+)-binding site is contributed by 8–15 (TGASGGIG). Ser137 is a binding site for substrate. Tyr150 functions as the Proton acceptor in the catalytic mechanism.

This sequence belongs to the short-chain dehydrogenases/reductases (SDR) family.

This is an uncharacterized protein from Bacillus subtilis (strain 168).